The sequence spans 166 residues: Single-stranded DNA-binding protein (166 aa).

Residues 4 to 110 form the SSB domain; sequence VNKVILVGNL…IVADQMQMLG (107 aa). The tract at residues 108–166 is disordered; it reads MLGGRDSGGDSGGGYGGGYDDAPRQQRAPAQRPAAAPQRPAPQAAPAANLADMDDDIPF. Residues 112–126 are compositionally biased toward gly residues; the sequence is RDSGGDSGGGYGGGY. Residues 132–155 are compositionally biased toward low complexity; it reads QQRAPAQRPAAAPQRPAPQAAPAA. Positions 161–166 match the Important for interaction with partner proteins motif; sequence DDDIPF.

In terms of assembly, homotetramer.

Functionally, plays an important role in DNA replication, recombination and repair. Binds to ssDNA and to an array of partner proteins to recruit them to their sites of action during DNA metabolism. This chain is Single-stranded DNA-binding protein (ssb), found in Bordetella bronchiseptica (strain ATCC BAA-588 / NCTC 13252 / RB50) (Alcaligenes bronchisepticus).